A 427-amino-acid chain; its full sequence is Serine hydroxymethyltransferase (427 aa).

(6S)-5,6,7,8-tetrahydrofolate is bound by residues Leu124 and 128 to 130; that span reads GHL. N6-(pyridoxal phosphate)lysine is present on Lys233.

The protein belongs to the SHMT family. As to quaternary structure, homodimer. Pyridoxal 5'-phosphate serves as cofactor.

It localises to the cytoplasm. The catalysed reaction is (6R)-5,10-methylene-5,6,7,8-tetrahydrofolate + glycine + H2O = (6S)-5,6,7,8-tetrahydrofolate + L-serine. It participates in one-carbon metabolism; tetrahydrofolate interconversion. The protein operates within amino-acid biosynthesis; glycine biosynthesis; glycine from L-serine: step 1/1. Functionally, catalyzes the reversible interconversion of serine and glycine with tetrahydrofolate (THF) serving as the one-carbon carrier. This reaction serves as the major source of one-carbon groups required for the biosynthesis of purines, thymidylate, methionine, and other important biomolecules. Also exhibits THF-independent aldolase activity toward beta-hydroxyamino acids, producing glycine and aldehydes, via a retro-aldol mechanism. This is Serine hydroxymethyltransferase from Paracoccus denitrificans (strain Pd 1222).